A 710-amino-acid chain; its full sequence is Polyribonucleotide nucleotidyltransferase (710 aa).

Asp-491 and Asp-497 together coordinate Mg(2+). The KH domain maps to Pro-558–Ile-618. The S1 motif domain occupies Gly-628–Lys-696.

The protein belongs to the polyribonucleotide nucleotidyltransferase family. The cofactor is Mg(2+).

The protein resides in the cytoplasm. The catalysed reaction is RNA(n+1) + phosphate = RNA(n) + a ribonucleoside 5'-diphosphate. Involved in mRNA degradation. Catalyzes the phosphorolysis of single-stranded polyribonucleotides processively in the 3'- to 5'-direction. The sequence is that of Polyribonucleotide nucleotidyltransferase from Thermodesulfovibrio yellowstonii (strain ATCC 51303 / DSM 11347 / YP87).